A 340-amino-acid chain; its full sequence is Ferrochelatase (340 aa).

Residues His189 and Glu292 each contribute to the Fe cation site.

This sequence belongs to the ferrochelatase family.

The protein resides in the cytoplasm. The catalysed reaction is heme b + 2 H(+) = protoporphyrin IX + Fe(2+). It participates in porphyrin-containing compound metabolism; protoheme biosynthesis; protoheme from protoporphyrin-IX: step 1/1. In terms of biological role, catalyzes the ferrous insertion into protoporphyrin IX. In Pseudomonas fluorescens (strain ATCC BAA-477 / NRRL B-23932 / Pf-5), this protein is Ferrochelatase.